We begin with the raw amino-acid sequence, 452 residues long: Keratin, type II cytoskeletal 80 (452 aa).

The tract at residues 1–82 is head; the sequence is MACRSCVVGF…DPAVQQLKNQ (82 aa). Ser45 is subject to Phosphoserine. The coil 1A stretch occupies residues 82 to 118; that stretch reads QEKEEMKALNDKFASLIGKVQALEQRNQLLETRWSFL. The IF rod domain maps to 83–394; that stretch reads EKEEMKALND…KLVEGEEGRM (312 aa). The segment at 119 to 135 is linker 1; that stretch reads QGQDSAIFDLGHLYEEY. A coil 1B region spans residues 136 to 227; the sequence is QGRLQEELRK…TIYEQELKDL (92 aa). The segment at 228 to 251 is linker 12; it reads AAQVKDVSVTVGMDSRCHIDLSGI. The coil 2 stretch occupies residues 252–390; that stretch reads VEEVKAQYDA…ATYRKLVEGE (139 aa). The segment at 391-452 is tail; it reads EGRMDSPSAT…YFSQESEVSE (62 aa). Position 396 is a phosphoserine (Ser396). Residues 412–434 are disordered; it reads AASRSGLSKAPSRKKKGSKGPVI.

Belongs to the intermediate filament family. As to quaternary structure, heterotetramer of two type I and two type II keratins. Weakly expressed in tongue, but not skin or in any other tissues or organs examined.

The protein is Keratin, type II cytoskeletal 80 (KRT80) of Homo sapiens (Human).